We begin with the raw amino-acid sequence, 282 residues long: Succinate dehydrogenase [ubiquinone] iron-sulfur subunit, mitochondrial (282 aa).

A mitochondrion-targeting transit peptide spans 1 to 21; the sequence is MLRGSTSVCRSLELVTQAARY. A 2Fe-2S ferredoxin-type domain is found at 39–129; that stretch reads EIYRFNPEEP…TTKIYPLPHM (91 aa). Residues Cys89, Cys94, Cys97, and Cys109 each coordinate [2Fe-2S] cluster. Positions 172–202 constitute a 4Fe-4S ferredoxin-type domain; sequence EQEKLDGLYECILCACCSASCPSYWWNADKY. Residues Cys182, Cys185, and Cys188 each contribute to the [4Fe-4S] cluster site. Residue Cys192 participates in [3Fe-4S] cluster binding. Trp197 contacts a rhodoquinol. Trp197 contributes to the a ubiquinone binding site. [3Fe-4S] cluster-binding residues include Cys239 and Cys245. Cys249 contributes to the [4Fe-4S] cluster binding site.

The protein belongs to the succinate dehydrogenase/fumarate reductase iron-sulfur protein family. Component of the mitochondrial electron transport chain complex II composed of four subunits: a flavoprotein (Fp), an iron-sulfur protein (Ip), and a large cytochrome b (CybL) subunit and a small cytochrome b (CybS) subunit. There are 2 developmental stage-specific forms of complex II which have the Ip and CybL subunits in common. Complex II from the free-living larvae (aerobic environment) acts as a succinate dehydrogenase and is composed of the common subunit Ip and CybL and the stage specific subunits FpL and CybSL. Complex II from parasitic larvae and adults (anaerobic environment) acts as a fumarate reductase and is composed of the common subunit Ip and CybL and the stage specific subunits FpA and CybSA. [2Fe-2S] cluster serves as cofactor. It depends on [3Fe-4S] cluster as a cofactor. [4Fe-4S] cluster is required as a cofactor. In terms of tissue distribution, expressed in adult muscles (at protein level).

Its subcellular location is the mitochondrion inner membrane. The enzyme catalyses a ubiquinone + succinate = a ubiquinol + fumarate. The catalysed reaction is a rhodoquinone + succinate = a rhodoquinol + fumarate. It functions in the pathway carbohydrate metabolism; tricarboxylic acid cycle; fumarate from succinate (eukaryal route): step 1/1. Its activity is regulated as follows. Inhibited by the fungicide flutolanil. Functionally, iron-sulfur protein (Ip) subunit of the mitochondrial electron transport chain complex II which, together with the flavoprotein (Fp) subunit forms the catalytic core of the complex. During the free-living egg-larvae stages, which occur in an aerobic environment, complex II acts as a succinate dehydrogenase by transferring electrons from succinate to ubiquinone. During the parasitic larvae and adult stages, which occur in an anaerobic environment, complex II acts as a fumarate reductase by transferring electrons from rhodoquinol to fumarate. In Ascaris suum (Pig roundworm), this protein is Succinate dehydrogenase [ubiquinone] iron-sulfur subunit, mitochondrial.